The following is a 130-amino-acid chain: uncharacterized protein (130 aa).

The first 18 residues, 1–18 (MVEVWWSLIGAAVPALIA), serve as a signal peptide directing secretion.

This is an uncharacterized protein from Arabidopsis thaliana (Mouse-ear cress).